We begin with the raw amino-acid sequence, 324 residues long: Beta-ketoacyl-[acyl-carrier-protein] synthase III (324 aa).

Cys-112 is an active-site residue. Residues 181–202 (TDGSRGQNLTSGNNPLRSPFSD) are disordered. Polar residues predominate over residues 184 to 196 (SRGQNLTSGNNPL). Residue His-249 is part of the active site. Residues 250 to 254 (QANRR) are ACP-binding. Asn-279 is an active-site residue.

The protein belongs to the thiolase-like superfamily. FabH family. Homodimer.

The protein localises to the cytoplasm. The enzyme catalyses malonyl-[ACP] + acetyl-CoA + H(+) = 3-oxobutanoyl-[ACP] + CO2 + CoA. The protein operates within lipid metabolism; fatty acid biosynthesis. Catalyzes the condensation reaction of fatty acid synthesis by the addition to an acyl acceptor of two carbons from malonyl-ACP. Catalyzes the first condensation reaction which initiates fatty acid synthesis and may therefore play a role in governing the total rate of fatty acid production. Possesses both acetoacetyl-ACP synthase and acetyl transacylase activities. Its substrate specificity determines the biosynthesis of branched-chain and/or straight-chain of fatty acids. This chain is Beta-ketoacyl-[acyl-carrier-protein] synthase III, found in Streptococcus uberis (strain ATCC BAA-854 / 0140J).